A 388-amino-acid polypeptide reads, in one-letter code: S-adenosylmethionine synthase (388 aa).

His-16 is an ATP binding site. Asp-18 contributes to the Mg(2+) binding site. Position 44 (Glu-44) interacts with K(+). L-methionine is bound by residues Glu-57 and Gln-100. The interval 100–110 (QSPEIAQGVDR) is flexible loop. ATP is bound by residues 165–167 (DAK), Asp-240, 246–247 (RK), Ala-263, and Lys-267. Asp-240 provides a ligand contact to L-methionine. Residue Lys-271 coordinates L-methionine.

The protein belongs to the AdoMet synthase family. In terms of assembly, homotetramer; dimer of dimers. Mg(2+) is required as a cofactor. It depends on K(+) as a cofactor.

Its subcellular location is the cytoplasm. It catalyses the reaction L-methionine + ATP + H2O = S-adenosyl-L-methionine + phosphate + diphosphate. It functions in the pathway amino-acid biosynthesis; S-adenosyl-L-methionine biosynthesis; S-adenosyl-L-methionine from L-methionine: step 1/1. Catalyzes the formation of S-adenosylmethionine (AdoMet) from methionine and ATP. The overall synthetic reaction is composed of two sequential steps, AdoMet formation and the subsequent tripolyphosphate hydrolysis which occurs prior to release of AdoMet from the enzyme. This is S-adenosylmethionine synthase from Acinetobacter baumannii (strain ACICU).